A 413-amino-acid chain; its full sequence is Dual-specificity RNA methyltransferase RlmN (413 aa).

The active-site Proton acceptor is Glu-126. A Radical SAM core domain is found at 132 to 381 (EEGRGTLCIS…IRTPRGRDIL (250 aa)). A disulfide bridge links Cys-139 with Cys-384. [4Fe-4S] cluster-binding residues include Cys-146, Cys-150, and Cys-153. S-adenosyl-L-methionine is bound by residues 210-211 (GE), Ser-242, 264-266 (SLH), and Asn-341. The active-site S-methylcysteine intermediate is the Cys-384.

It belongs to the radical SAM superfamily. RlmN family. Requires [4Fe-4S] cluster as cofactor.

Its subcellular location is the cytoplasm. The enzyme catalyses adenosine(2503) in 23S rRNA + 2 reduced [2Fe-2S]-[ferredoxin] + 2 S-adenosyl-L-methionine = 2-methyladenosine(2503) in 23S rRNA + 5'-deoxyadenosine + L-methionine + 2 oxidized [2Fe-2S]-[ferredoxin] + S-adenosyl-L-homocysteine. The catalysed reaction is adenosine(37) in tRNA + 2 reduced [2Fe-2S]-[ferredoxin] + 2 S-adenosyl-L-methionine = 2-methyladenosine(37) in tRNA + 5'-deoxyadenosine + L-methionine + 2 oxidized [2Fe-2S]-[ferredoxin] + S-adenosyl-L-homocysteine. Specifically methylates position 2 of adenine 2503 in 23S rRNA and position 2 of adenine 37 in tRNAs. m2A2503 modification seems to play a crucial role in the proofreading step occurring at the peptidyl transferase center and thus would serve to optimize ribosomal fidelity. The chain is Dual-specificity RNA methyltransferase RlmN from Sinorhizobium medicae (strain WSM419) (Ensifer medicae).